The chain runs to 306 residues: Beta-lactamase 1 (306 aa).

An N-terminal signal peptide occupies residues 1-43 (MKNKKMLKIGMCVGILGLSITSLVTFTGGALQVEAKEKTGQVK). The Acyl-ester intermediate role is filled by Ser-89. The active-site Proton acceptor is the Glu-185. Residue 251–253 (KSG) coordinates substrate.

This sequence belongs to the class-A beta-lactamase family.

The protein localises to the secreted. The catalysed reaction is a beta-lactam + H2O = a substituted beta-amino acid. Its function is as follows. Acts preferentially on penicillins. This is Beta-lactamase 1 (penPC) from Bacillus cereus.